Reading from the N-terminus, the 89-residue chain is Small ribosomal subunit protein uS15 (89 aa).

The tract at residues 1 to 22 (MPLSKEQKQEVMEKYKLHEHDT) is disordered.

The protein belongs to the universal ribosomal protein uS15 family. In terms of assembly, part of the 30S ribosomal subunit. Forms a bridge to the 50S subunit in the 70S ribosome, contacting the 23S rRNA.

In terms of biological role, one of the primary rRNA binding proteins, it binds directly to 16S rRNA where it helps nucleate assembly of the platform of the 30S subunit by binding and bridging several RNA helices of the 16S rRNA. Its function is as follows. Forms an intersubunit bridge (bridge B4) with the 23S rRNA of the 50S subunit in the ribosome. The sequence is that of Small ribosomal subunit protein uS15 from Natranaerobius thermophilus (strain ATCC BAA-1301 / DSM 18059 / JW/NM-WN-LF).